A 441-amino-acid polypeptide reads, in one-letter code: Putative serine/threonine-protein kinase F31E3.2 (441 aa).

Residues 1-16 (MGNVATRKRPGCHHHI) show a composition bias toward basic residues. The segment at 1–41 (MGNVATRKRPGCHHHIGRNEENLDDDEDGPAKKRLRIGEPQ) is disordered. The 256-residue stretch at 126-381 (FVLERQLGRG…FTVLHAHPFF (256 aa)) folds into the Protein kinase domain. Residues 132–140 (LGRGSFGVV) and Lys156 each bind ATP. Asp253 (proton acceptor) is an active-site residue.

The protein belongs to the protein kinase superfamily. Ser/Thr protein kinase family.

It carries out the reaction L-seryl-[protein] + ATP = O-phospho-L-seryl-[protein] + ADP + H(+). It catalyses the reaction L-threonyl-[protein] + ATP = O-phospho-L-threonyl-[protein] + ADP + H(+). The protein is Putative serine/threonine-protein kinase F31E3.2 of Caenorhabditis elegans.